Consider the following 209-residue polypeptide: V-type ATP synthase subunit D (209 aa).

This sequence belongs to the V-ATPase D subunit family.

Functionally, produces ATP from ADP in the presence of a proton gradient across the membrane. This is V-type ATP synthase subunit D from Thermoanaerobacter pseudethanolicus (strain ATCC 33223 / 39E) (Clostridium thermohydrosulfuricum).